Here is a 485-residue protein sequence, read N- to C-terminus: MEFLGTTQTASYCGPKKCCGLTSLPAVQAPVIQECYQPYYLPGYRYLNSWRPSLFYKISNVQTCPDESSSTLRPPTTLPALRSALFSRYSPHDWDQSNQLQVRGAEASRLWASRLTDDSVRLLQDKDQLTQQMQQGTTRNLGQRLSDIGFWKSELSYELDRLLTENQNLETVKRRLECAANEVNCPLQVALECLYHREKRIGIDLVHDNVEKNLIREVDLLKCCQQQMRKLAQRIDLQMRDNRDAQHALERDLDDKSSAQCIDEKCFNLRNTSDCISFFHGMEKIDGTISVPETWAKFSNDNIKHSQNMRADSIRLREEAEHLFETLSDQMWRQFTDTNLAFNARISEVTDVKNKLQTQLAKTLQEIFQAENTIMLLERSIMAKEGPLKVAQTRLECRTWRPNVELCRDVPQFKLVNEVFTIDDTLQTLKLRLRETQDMLQLLVMTKCRLEHELAIKANTLCIDKEKCMGMRKTFPCTPRLVGHT.

4 coiled-coil regions span residues 113 to 185 (SRLT…EVNC), 225 to 251 (QQQMRKLAQRIDLQMRDNRDAQHALER), 342 to 385 (FNAR…MAKE), and 423 to 443 (DDTLQTLKLRLRETQDMLQLL).

It belongs to the tektin family. In terms of assembly, microtubule inner protein component of sperm flagellar doublet microtubules. Interacts with TEKT3. Ubiquitinated, leading to its degradation. Deubiquitinated by USP16, promoting its stability.

It is found in the cytoplasm. The protein resides in the cytoskeleton. It localises to the flagellum axoneme. Its function is as follows. Sperm-specific microtubule inner protein (MIP) part of the dynein-decorated doublet microtubules (DMTs) in flagellar axoneme. Forms an extensive interaction network in different conformations that reinforces the helix bundle composed by other tektin proteins (TEKT1 to TEKT4) and MIPs to anchor the tektin bundle onto the tubulin wall of A-tubule of the sperm flagellum. This Macaca fascicularis (Crab-eating macaque) protein is Tektin-5 (TEKT5).